Consider the following 37-residue polypeptide: Potassium channel toxin alpha-KTx 1.13 (37 aa).

Gln-1 bears the Pyrrolidone carboxylic acid mark. 3 cysteine pairs are disulfide-bonded: Cys-7–Cys-28, Cys-13–Cys-33, and Cys-17–Cys-35. The interaction with Ca(2+)-activated K(+) channels stretch occupies residues 26 to 33 (GKCMNKKC).

This sequence belongs to the short scorpion toxin superfamily. Potassium channel inhibitor family. Alpha-KTx 01 subfamily. In terms of tissue distribution, expressed by the venom gland.

It is found in the secreted. Functionally, potent selective inhibitor of high conductance (maxi-K), different medium and small conductance calcium-activated potassium channels (KCa1.1/KCNMA1 and others), as well as a voltage-dependent potassium channel (Kv1.3/KCNA3&gt;Kv1.2/KCNA2&gt;Kv1.6/KCNA3&gt;&gt;Shaker/Sh). It blocks channel activity by a simple bimolecular inhibition process. Has a pH-specific antimicrobial activity against bacteria (B.subtilis, E.coli and S.aureus) and the fungus C.albicans. In Leiurus hebraeus (Hebrew deathstalker scorpion), this protein is Potassium channel toxin alpha-KTx 1.13.